The sequence spans 166 residues: EndA-like protein (166 aa).

This sequence belongs to the tRNA-intron endonuclease family. Archaeal short subfamily.

The chain is EndA-like protein from Methanopyrus kandleri (strain AV19 / DSM 6324 / JCM 9639 / NBRC 100938).